Reading from the N-terminus, the 493-residue chain is Trichothecene 8-O-acetyltransferase (493 aa).

Polar residues predominate over residues 180-191 (QDQNENEVQQPK). Positions 180 to 199 (QDQNENEVQQPKNLPDPDEP) are disordered.

The protein operates within sesquiterpene biosynthesis; trichothecene biosynthesis. Functionally, trichothecene 8-O-acetyltransferase; part of 2-gene cluster involved in trichothecene C-8 modification that mediates the biosynthesis of T2-toxin. The biosynthesis of trichothecenes begins with the cyclization of farnesyl diphosphate to trichodiene and is catalyzed by the trichodiene synthase TRI5. Trichodiene undergoes a series of oxygenations catalyzed by the cytochrome P450 monooxygenase TRI4. TRI4 controls the addition of four oxygens at C-2, C-3, C-11, and the C-12, C-13-epoxide to form the intermediate isotrichotriol. Isotrichotriol then undergoes a non-enzymatic isomerization and cyclization to form isotrichodermol. During this process, the oxygen at the C-2 position becomes the pyran ring oxygen and the hydroxyl group at C-11 is lost. More complex type A trichothecenes are built by modifying isotrichodermol through a series of paired hydroxylation and acetylation or acylation steps. Isotrichodermol is converted to isotrichodermin by the acetyltransferase TRI101. TRI101 encodes a C-3 transacetylase that acts as a self-protection or resistance factor during biosynthesis and that the presence of a free C-3 hydroxyl group is a key component of Fusarium trichothecene phytotoxicity. A second hydroxyl group is added to C-15 by the trichothecene C-15 hydroxylase TRI11, producing 15-decalonectrin, which is then acetylated by TRI3, producing calonectrin. A third hydroxyl group is added at C-4 by the cytochrome P450 monooxygenase TRI13, converting calonectrin to 3,15-diacetoxyspirpenol, which is subsequently acetylated bythe acetyltransferase TRI7. A fourth hydroxyl group is added to C-8 by the cytochrome P450 monooxygenase TRI1, followed by the addition of an isovaleryl moiety by TRI16. Finally, the acetyl group is removed from the C-3 position by the trichothecene C-3 esterase TRI8 to produce T-2 toxin. The chain is Trichothecene 8-O-acetyltransferase from Fusarium sporotrichioides.